Here is a 265-residue protein sequence, read N- to C-terminus: Flagellar brake protein YcgR (265 aa).

The region spanning 135 to 252 (QRRESYRLET…DETIQRYIFR (118 aa)) is the PilZ domain.

Belongs to the YcgR family. In terms of assembly, monomer. Interacts with the flagellar basal bodies.

It is found in the bacterial flagellum basal body. Acts as a flagellar brake, regulating swimming and swarming in a bis-(3'-5') cyclic diguanylic acid (c-di-GMP)-dependent manner. Binds 1 c-di-GMP dimer per subunit. Increasing levels of c-di-GMP lead to decreased motility. In Xanthomonas campestris pv. campestris (strain B100), this protein is Flagellar brake protein YcgR.